The chain runs to 706 residues: Forkhead box protein P2 (706 aa).

The segment covering Met1–Asp28 has biased composition (polar residues). Disordered stretches follow at residues Met1–Ser45 and Ile275–His305. Positions Ser287–Ser296 are enriched in low complexity. The segment at Gly337–His362 adopts a C2H2-type zinc-finger fold. Residues Val379–Leu400 are leucine-zipper. The interval Pro413–Val417 is ctbp1-binding. Residues Arg495–Leu585 constitute a DNA-binding region (fork-head). The interval Asp672–Glu706 is disordered. Over residues Leu690 to Glu706 the composition is skewed to acidic residues.

As to quaternary structure, dimerization is required for DNA-binding. In terms of tissue distribution, at stage 15, expressed in the anterior/superior eye field and the caudal branchial arch. At later stages, expression persists in the retina and in the caudal branchial arch. Expressed in the pronephros and the tip of the tail. Beginning with stage 35, expression in the brain is localized to distinct subdomains of the anterior prosencephalon, the medial mesencephalon and to lateral domains of the hindbrain.

It is found in the nucleus. Its function is as follows. Transcriptional repressor. The sequence is that of Forkhead box protein P2 from Xenopus laevis (African clawed frog).